The following is a 232-amino-acid chain: Triosephosphate isomerase (232 aa).

6 to 8 is a substrate binding site; the sequence is NLK. His91 acts as the Electrophile in catalysis. Residue Glu158 is the Proton acceptor of the active site. The substrate site is built by Gly164 and Ser194.

This sequence belongs to the triosephosphate isomerase family. As to quaternary structure, homodimer.

It is found in the cytoplasm. The catalysed reaction is D-glyceraldehyde 3-phosphate = dihydroxyacetone phosphate. Its pathway is carbohydrate biosynthesis; gluconeogenesis. It participates in carbohydrate degradation; glycolysis; D-glyceraldehyde 3-phosphate from glycerone phosphate: step 1/1. Functionally, involved in the gluconeogenesis. Catalyzes stereospecifically the conversion of dihydroxyacetone phosphate (DHAP) to D-glyceraldehyde-3-phosphate (G3P). The polypeptide is Triosephosphate isomerase (Campylobacter hominis (strain ATCC BAA-381 / DSM 21671 / CCUG 45161 / LMG 19568 / NCTC 13146 / CH001A)).